A 358-amino-acid chain; its full sequence is Starch-binding domain-containing protein 1 (358 aa).

Residues 1–6 (MGAVWS) are Extracellular-facing. A helical transmembrane segment spans residues 7-23 (ALLVGGGLAGALFVWLL). The Cytoplasmic segment spans residues 24-358 (RGGPGDTGKD…KVVHAWWGIH (335 aa)). Residues 30–42 (TGKDGDAEQEKDA) show a composition bias toward basic and acidic residues. 2 disordered regions span residues 30–70 (TGKD…QELV) and 104–151 (SREV…SPMG). Positions 50-66 (PGGHQSGSSGLSPGPSG) are enriched in low complexity. S65 is modified (phosphoserine). Positions 106–115 (EVCDNSREHV) are enriched in basic and acidic residues. The residue at position 117 (S117) is a Phosphoserine. The span at 126–140 (PATSETSNSRSYSEV) shows a compositional bias: polar residues. Phosphoserine occurs at positions 148, 175, 188, and 194. An LIR motif is present at residues 200-206 (HEEWEMV). S210, S211, and S220 each carry phosphoserine. In terms of domain architecture, CBM20 spans 258–357 (PAGSQQVSVR…DKVVHAWWGI (100 aa)).

Interacts with the ATG8 family proteins GABARAP and GABARAPL1. Interacts with several glycogen-associated proteins, such as GYS2 (liver glycogen synthase), GDE (glycogen debranching enzyme), GBE1 (glycogen branching enzyme 1) and EPM2A (Laforin). Ubiquitinated, which leads to proteasomal degradation. Expressed at high level in skeletal and cardiac muscles. Moderately expressed in liver and placenta. No expression is found in pancreas, kidney or lung. Present in skeletal muscle, heart and placenta (at protein level).

Its subcellular location is the preautophagosomal structure membrane. It is found in the endoplasmic reticulum membrane. The protein localises to the cell membrane. It localises to the sarcolemma. The protein resides in the T-tubule. Functionally, acts as a cargo receptor for glycogen. Delivers its cargo to an autophagic pathway called glycophagy, resulting in the transport of glycogen to lysosomes. The polypeptide is Starch-binding domain-containing protein 1 (Homo sapiens (Human)).